The following is a 209-amino-acid chain: Large ribosomal subunit protein uL3 (209 aa).

Residues 126-165 (HNFGGGSRTHGQSDRLRAPGSVGGSSDPSRTFRGTRMAGR) are disordered.

This sequence belongs to the universal ribosomal protein uL3 family. Part of the 50S ribosomal subunit. Forms a cluster with proteins L14 and L19.

Its function is as follows. One of the primary rRNA binding proteins, it binds directly near the 3'-end of the 23S rRNA, where it nucleates assembly of the 50S subunit. The protein is Large ribosomal subunit protein uL3 of Chlorobium limicola (strain DSM 245 / NBRC 103803 / 6330).